Reading from the N-terminus, the 202-residue chain is Dephospho-CoA kinase (202 aa).

Residues 3-201 (AIGLTGGIGS…QRYLGFAAAA (199 aa)) enclose the DPCK domain. 11-16 (GSGKTT) serves as a coordination point for ATP.

This sequence belongs to the CoaE family.

It is found in the cytoplasm. The catalysed reaction is 3'-dephospho-CoA + ATP = ADP + CoA + H(+). Its pathway is cofactor biosynthesis; coenzyme A biosynthesis; CoA from (R)-pantothenate: step 5/5. Functionally, catalyzes the phosphorylation of the 3'-hydroxyl group of dephosphocoenzyme A to form coenzyme A. This chain is Dephospho-CoA kinase, found in Burkholderia lata (strain ATCC 17760 / DSM 23089 / LMG 22485 / NCIMB 9086 / R18194 / 383).